The primary structure comprises 246 residues: Dehydration-responsive element-binding protein 1H (246 aa).

A disordered region spans residues 1 to 43 (MDMAGHEVNSSSSSSGAESSSSSSGRQQYKKRPAGRTKFRETR). Positions 10 to 24 (SSSSSSGAESSSSSS) are enriched in low complexity. Residues 28 to 37 (QYKKRPAGRT) show a composition bias toward basic residues. The AP2/ERF DNA-binding region spans 46–110 (VYRGVRRRGG…GGGAACLNFQ (65 aa)). Positions 155-187 (AMDEATSGVSAPPPLANNAGSSETPGPSSIDGT) are disordered. The span at 172–181 (NAGSSETPGP) shows a compositional bias: polar residues.

Belongs to the AP2/ERF transcription factor family. ERF subfamily.

The protein resides in the nucleus. In terms of biological role, transcriptional activator that binds specifically to the DNA sequence 5'-[AG]CCGAC-3'. Binding to the C-repeat/DRE element mediates high salinity- and dehydration-inducible transcription. This is Dehydration-responsive element-binding protein 1H (DREB1H) from Oryza sativa subsp. indica (Rice).